Here is a 296-residue protein sequence, read N- to C-terminus: UDP-N-acetylenolpyruvoylglucosamine reductase (296 aa).

Positions 19–203 constitute an FAD-binding PCMH-type domain; sequence KVGGFAEYFS…LETTQKNLKK (185 aa). Arg-166 is an active-site residue. Ser-217 (proton donor) is an active-site residue. Glu-287 is an active-site residue.

It belongs to the MurB family. It depends on FAD as a cofactor.

Its subcellular location is the cytoplasm. It catalyses the reaction UDP-N-acetyl-alpha-D-muramate + NADP(+) = UDP-N-acetyl-3-O-(1-carboxyvinyl)-alpha-D-glucosamine + NADPH + H(+). It functions in the pathway cell wall biogenesis; peptidoglycan biosynthesis. Cell wall formation. This Prochlorococcus marinus subsp. pastoris (strain CCMP1986 / NIES-2087 / MED4) protein is UDP-N-acetylenolpyruvoylglucosamine reductase.